A 134-amino-acid polypeptide reads, in one-letter code: Phosphomevalonate dehydratase small subunit (134 aa).

Ser-62 acts as the Proton acceptor in catalysis.

This sequence belongs to the AcnX type II small subunit family. As to quaternary structure, heterodimer composed of a large subunit (PMDh-L) and a small subunit (PMDh-S).

The catalysed reaction is (R)-5-phosphomevalonate = (2E)-3-methyl-5-phosphooxypent-2-enoate + H2O. Its pathway is isoprenoid biosynthesis; isopentenyl diphosphate biosynthesis via mevalonate pathway. Its function is as follows. Component of a hydro-lyase that catalyzes the dehydration of mevalonate 5-phosphate (MVA5P) to form trans-anhydromevalonate 5-phosphate (tAHMP). Involved in the archaeal mevalonate (MVA) pathway, which provides fundamental precursors for isoprenoid biosynthesis, such as isopentenyl diphosphate (IPP) and dimethylallyl diphosphate (DMAPP). The polypeptide is Phosphomevalonate dehydratase small subunit (Pyrococcus furiosus (strain ATCC 43587 / DSM 3638 / JCM 8422 / Vc1)).